Here is a 116-residue protein sequence, read N- to C-terminus: Large ribosomal subunit protein bL19 (116 aa).

Belongs to the bacterial ribosomal protein bL19 family.

This protein is located at the 30S-50S ribosomal subunit interface and may play a role in the structure and function of the aminoacyl-tRNA binding site. This chain is Large ribosomal subunit protein bL19, found in Mycoplasmopsis agalactiae (strain NCTC 10123 / CIP 59.7 / PG2) (Mycoplasma agalactiae).